Consider the following 193-residue polypeptide: Xanthine phosphoribosyltransferase (193 aa).

Residues leucine 20 and threonine 27 each contribute to the xanthine site. Residue 128 to 132 coordinates 5-phospho-alpha-D-ribose 1-diphosphate; it reads ANGQA. A xanthine-binding site is contributed by lysine 156.

The protein belongs to the purine/pyrimidine phosphoribosyltransferase family. Xpt subfamily. As to quaternary structure, homodimer.

It is found in the cytoplasm. The enzyme catalyses XMP + diphosphate = xanthine + 5-phospho-alpha-D-ribose 1-diphosphate. The protein operates within purine metabolism; XMP biosynthesis via salvage pathway; XMP from xanthine: step 1/1. In terms of biological role, converts the preformed base xanthine, a product of nucleic acid breakdown, to xanthosine 5'-monophosphate (XMP), so it can be reused for RNA or DNA synthesis. In Streptococcus gordonii (strain Challis / ATCC 35105 / BCRC 15272 / CH1 / DL1 / V288), this protein is Xanthine phosphoribosyltransferase.